A 270-amino-acid chain; its full sequence is Transcription factor PU.1 (270 aa).

The tract at residues 123–164 (SLSPAQPSSDEEEGERQSPPLEVSDGEADGLEPGPGLLPGET) is disordered. 2 positions are modified to phosphoserine: S140 and S146. The segment covering 153–164 (LEPGPGLLPGET) has biased composition (low complexity). The ETS DNA-binding region spans 170 to 253 (IRLYQFLLDL…VKKKLTYQFS (84 aa)). The DNA site is built by K217, R230, R233, and K243.

This sequence belongs to the ETS family. Binds DNA as a monomer. Can form homomers. Directly interacts with CEBPD/NF-IL6-beta; this interaction does not affect DNA-binding properties of each partner. Interacts with NONO/p54(nrb). Interacts with RUNX1/AML1. Interacts with GFI1; the interaction represses SPI1 transcriptional activity, hence blocks SPI1-induced macrophage differentiation of myeloid progenitor cells. Interacts with CEBPE. Interacts with IRF4/Pip and IRF8. Interacts with JUN. Interacts with RB1. Interacts with TBP. In terms of tissue distribution, in the bone marrow, concentrated in hematopoietic stem cell, lymphoid progenitor, myeloid lineage (granulocyte macrophage progenitors, classical dendritic cells, monocytes) and B-cell clusters. Among B-cells, predominantly expressed in pre-B1 cells. Expressed in germinal center B-cells.

The protein resides in the nucleus. Its activity is regulated as follows. Transcriptional activity at macrophage-specific genes is inhibited by interaction with GFI1, which results in the inhibition of SPI1-induced macrophage differentiation of myeloid progenitor cells, but not that of the granulocyte lineage. Pioneer transcription factor, which controls hematopoietic cell fate by decompacting stem cell heterochromatin and allowing other transcription factors to enter otherwise inaccessible genomic sites. Once in open chromatin, can directly control gene expression by binding genetic regulatory elements and can also more broadly influence transcription by recruiting transcription factors, such as interferon regulatory factors (IRFs), to otherwise inaccessible genomic regions. Transcriptionally activates genes important for myeloid and lymphoid lineages, such as CSF1R. Transcriptional activation from certain promoters, possibly containing low affinity binding sites, is achieved cooperatively with other transcription factors. FCER1A transactivation is achieved in cooperation with GATA1. May be particularly important for the pro- to pre-B cell transition. Binds (via the ETS domain) onto the purine-rich DNA core sequence 5'-GAGGAA-3', also known as the PU-box. In vitro can bind RNA and interfere with pre-mRNA splicing. In Homo sapiens (Human), this protein is Transcription factor PU.1 (SPI1).